A 256-amino-acid chain; its full sequence is Protein TV0584 (256 aa).

This sequence belongs to the CinA family.

This Thermoplasma volcanium (strain ATCC 51530 / DSM 4299 / JCM 9571 / NBRC 15438 / GSS1) protein is Protein TV0584.